Consider the following 241-residue polypeptide: Small ribosomal subunit protein uS2 (241 aa).

Belongs to the universal ribosomal protein uS2 family.

The polypeptide is Small ribosomal subunit protein uS2 (Klebsiella pneumoniae (strain 342)).